A 594-amino-acid polypeptide reads, in one-letter code: Sodium-dependent glucose transporter 1 (594 aa).

The next 11 helical transmembrane spans lie at 77-97 (WLVSLALCASFLGLGMAISVL), 115-137 (LSYIFVGRASGYIGGSLLGGILF), 144-161 (LLLGFALLTTAFGMSGTP), 166-186 (AWVLTVLMSSVGVSMGVLDTG), 205-225 (ALHFSFAAGAFASPIIAKLLF), 269-289 (IVIGAFVLLVSLLFFSLYFCI), 311-331 (TLIILLSMFFFFYVGSEVAYG), 349-371 (AAGLNSLFWGAFAAGRGLAIFFA), 393-413 (LLCLFSQNYPMLWACTALYGI), 439-459 (IFVVGAALGEMVLPALLGFLL), and 467-487 (LLMYLTLCTATFTSILFPVLY).

It belongs to the major facilitator superfamily.

It localises to the apical cell membrane. Functionally, may function as a sodium-dependent glucose transporter. Potential channels for urea in the inner medulla of kidney. In Danio rerio (Zebrafish), this protein is Sodium-dependent glucose transporter 1 (mfsd4b).